Consider the following 758-residue polypeptide: 5-methyltetrahydropteroyltriglutamate--homocysteine methyltransferase (758 aa).

5-methyltetrahydropteroyltri-L-glutamate-binding positions include 16-19 (RELK) and Lys-112. L-homocysteine contacts are provided by residues 433-435 (IGS) and Glu-486. Residues 433-435 (IGS) and Glu-486 contribute to the L-methionine site. Residues 517–518 (RC) and Trp-563 each bind 5-methyltetrahydropteroyltri-L-glutamate. Residue Asp-601 participates in L-homocysteine binding. Asp-601 contributes to the L-methionine binding site. Glu-607 serves as a coordination point for 5-methyltetrahydropteroyltri-L-glutamate. His-643, Cys-645, and Glu-667 together coordinate Zn(2+). Residue His-696 is the Proton donor of the active site. Position 728 (Cys-728) interacts with Zn(2+).

This sequence belongs to the vitamin-B12 independent methionine synthase family. Zn(2+) serves as cofactor.

The catalysed reaction is 5-methyltetrahydropteroyltri-L-glutamate + L-homocysteine = tetrahydropteroyltri-L-glutamate + L-methionine. The protein operates within amino-acid biosynthesis; L-methionine biosynthesis via de novo pathway; L-methionine from L-homocysteine (MetE route): step 1/1. In terms of biological role, catalyzes the transfer of a methyl group from 5-methyltetrahydrofolate to homocysteine resulting in methionine formation. In Neisseria meningitidis serogroup C / serotype 2a (strain ATCC 700532 / DSM 15464 / FAM18), this protein is 5-methyltetrahydropteroyltriglutamate--homocysteine methyltransferase.